A 428-amino-acid polypeptide reads, in one-letter code: Glucose-1-phosphate adenylyltransferase (428 aa).

Alpha-D-glucose 1-phosphate contacts are provided by residues tyrosine 99, glycine 164, glutamate 179–lysine 180, and serine 190.

Belongs to the bacterial/plant glucose-1-phosphate adenylyltransferase family. Homotetramer.

It catalyses the reaction alpha-D-glucose 1-phosphate + ATP + H(+) = ADP-alpha-D-glucose + diphosphate. The protein operates within glycan biosynthesis; glycogen biosynthesis. Involved in the biosynthesis of ADP-glucose, a building block required for the elongation reactions to produce glycogen. Catalyzes the reaction between ATP and alpha-D-glucose 1-phosphate (G1P) to produce pyrophosphate and ADP-Glc. In Thermomicrobium roseum (strain ATCC 27502 / DSM 5159 / P-2), this protein is Glucose-1-phosphate adenylyltransferase.